The chain runs to 248 residues: Anamorsin homolog (248 aa).

The segment at 4–130 (FKGLQKSLYI…ETGSSARLSF (127 aa)) is N-terminal SAM-like domain. The tract at residues 131-161 (AKKSPSMNVWKISGDDEELIDEEELLDEEDK) is linker. [2Fe-2S] cluster-binding residues include Cys172, Cys181, Cys184, and Cys186. A fe-S binding site A region spans residues 172–186 (CSTTGKRKACKNCSC). Residues Cys209, Cys212, Cys220, and Cys223 each contribute to the [4Fe-4S] cluster site. Short sequence motifs (cx2C motif) lie at residues 209–212 (CGNC) and 220–223 (CSTC). The tract at residues 209–223 (CGNCYLGDAFRCSTC) is fe-S binding site B.

The protein belongs to the anamorsin family. Monomer. It depends on [2Fe-2S] cluster as a cofactor. The cofactor is [4Fe-4S] cluster.

The protein resides in the cytoplasm. It localises to the mitochondrion intermembrane space. In terms of biological role, component of the cytosolic iron-sulfur (Fe-S) protein assembly (CIA) machinery. Required for the maturation of extramitochondrial Fe-S proteins. Part of an electron transfer chain functioning in an early step of cytosolic Fe-S biogenesis, facilitating the de novo assembly of a [4Fe-4S] cluster on the cytosolic Fe-S scaffold complex. Electrons are transferred from NADPH via a FAD- and FMN-containing diflavin oxidoreductase. Together with the diflavin oxidoreductase, also required for the assembly of the diferric tyrosyl radical cofactor of ribonucleotide reductase (RNR), probably by providing electrons for reduction during radical cofactor maturation in the catalytic small subunit. In Drosophila mojavensis (Fruit fly), this protein is Anamorsin homolog.